The primary structure comprises 261 residues: MSDILDRIIAVKREEVAAAMRSAPLEALKLEASARDLRDFVGALRAKQAAGHAAVIAEVKKASPSKGVLREHFVPADIARSYAAHGAACLSVLTDEQFFQGSVRYLEEARAACTLPVLRKDFIVDAYQILEARAMGADAILLIAAALDTPLMQDLEAYAHSLGLAVLVEVHDRDEMEQALTLKTPLLGINNRNLRTFETSIQTTLDMLDMIPPERMVVTESGILSRTDVDTMRAANVNAFLVGEAFMRADQPGEELARMFF.

The protein belongs to the TrpC family.

It carries out the reaction 1-(2-carboxyphenylamino)-1-deoxy-D-ribulose 5-phosphate + H(+) = (1S,2R)-1-C-(indol-3-yl)glycerol 3-phosphate + CO2 + H2O. It functions in the pathway amino-acid biosynthesis; L-tryptophan biosynthesis; L-tryptophan from chorismate: step 4/5. The sequence is that of Indole-3-glycerol phosphate synthase from Burkholderia ambifaria (strain MC40-6).